A 327-amino-acid polypeptide reads, in one-letter code: Lipoyl synthase (327 aa).

7 residues coordinate [4Fe-4S] cluster: C72, C77, C83, C98, C102, C105, and S313. The region spanning 83–302 (CWSHGTATIM…RKVGLEKGFL (220 aa)) is the Radical SAM core domain.

Belongs to the radical SAM superfamily. Lipoyl synthase family. [4Fe-4S] cluster serves as cofactor.

The protein localises to the cytoplasm. The catalysed reaction is [[Fe-S] cluster scaffold protein carrying a second [4Fe-4S](2+) cluster] + N(6)-octanoyl-L-lysyl-[protein] + 2 oxidized [2Fe-2S]-[ferredoxin] + 2 S-adenosyl-L-methionine + 4 H(+) = [[Fe-S] cluster scaffold protein] + N(6)-[(R)-dihydrolipoyl]-L-lysyl-[protein] + 4 Fe(3+) + 2 hydrogen sulfide + 2 5'-deoxyadenosine + 2 L-methionine + 2 reduced [2Fe-2S]-[ferredoxin]. The protein operates within protein modification; protein lipoylation via endogenous pathway; protein N(6)-(lipoyl)lysine from octanoyl-[acyl-carrier-protein]: step 2/2. Functionally, catalyzes the radical-mediated insertion of two sulfur atoms into the C-6 and C-8 positions of the octanoyl moiety bound to the lipoyl domains of lipoate-dependent enzymes, thereby converting the octanoylated domains into lipoylated derivatives. In Francisella tularensis subsp. holarctica (strain FTNF002-00 / FTA), this protein is Lipoyl synthase.